We begin with the raw amino-acid sequence, 212 residues long: Large ribosomal subunit protein uL3 (212 aa).

Residues 147–166 are disordered; sequence GSTGQNQSPGKVFKGKKMPG. At Gln-153 the chain carries N5-methylglutamine.

Belongs to the universal ribosomal protein uL3 family. In terms of assembly, part of the 50S ribosomal subunit. Forms a cluster with proteins L14 and L19. Methylated by PrmB.

In terms of biological role, one of the primary rRNA binding proteins, it binds directly near the 3'-end of the 23S rRNA, where it nucleates assembly of the 50S subunit. The chain is Large ribosomal subunit protein uL3 from Psychrobacter sp. (strain PRwf-1).